The sequence spans 182 residues: 7-carboxy-7-deazaguanine synthase (182 aa).

Substrate-binding positions include 12-14 (LQG) and Arg-27. Residues 18–182 (HTGTPAVFIR…LQTHKLIDIR (165 aa)) form the Radical SAM core domain. Positions 31, 35, and 38 each coordinate [4Fe-4S] cluster. Residue Thr-40 coordinates Mg(2+). Thr-68 lines the substrate pocket. Residues Gly-70 and 111–113 (SPK) contribute to the S-adenosyl-L-methionine site.

The protein belongs to the radical SAM superfamily. 7-carboxy-7-deazaguanine synthase family. In terms of assembly, homodimer. The cofactor is [4Fe-4S] cluster. S-adenosyl-L-methionine is required as a cofactor. It depends on Mg(2+) as a cofactor.

It catalyses the reaction 6-carboxy-5,6,7,8-tetrahydropterin + H(+) = 7-carboxy-7-deazaguanine + NH4(+). The protein operates within purine metabolism; 7-cyano-7-deazaguanine biosynthesis. Functionally, catalyzes the complex heterocyclic radical-mediated conversion of 6-carboxy-5,6,7,8-tetrahydropterin (CPH4) to 7-carboxy-7-deazaguanine (CDG), a step common to the biosynthetic pathways of all 7-deazapurine-containing compounds. This chain is 7-carboxy-7-deazaguanine synthase, found in Bacteroides thetaiotaomicron (strain ATCC 29148 / DSM 2079 / JCM 5827 / CCUG 10774 / NCTC 10582 / VPI-5482 / E50).